Reading from the N-terminus, the 212-residue chain is Ribosomal RNA small subunit methyltransferase G (212 aa).

S-adenosyl-L-methionine is bound by residues Gly-80, Leu-85, Ala-131–Glu-132, and Arg-146.

This sequence belongs to the methyltransferase superfamily. RNA methyltransferase RsmG family.

The protein localises to the cytoplasm. The enzyme catalyses guanosine(527) in 16S rRNA + S-adenosyl-L-methionine = N(7)-methylguanosine(527) in 16S rRNA + S-adenosyl-L-homocysteine. In terms of biological role, specifically methylates the N7 position of guanine in position 527 of 16S rRNA. The polypeptide is Ribosomal RNA small subunit methyltransferase G (Xylella fastidiosa (strain 9a5c)).